The sequence spans 897 residues: Macoilin (897 aa).

Helical transmembrane passes span 113 to 133 (ICYLFIPIRMLIFLATTYVWI), 157 to 177 (QSWPIVFITCFIVIFELFLRI), 181 to 201 (PILISFFPNVAEYAGVSPVWP), and 204 to 224 (LNAFFGAHSIGYPVILITVSM). Composition is skewed to polar residues over residues 291 to 304 (IQAASATPPTSSKK) and 329 to 338 (GNSGFNSTPP). A disordered region spans residues 291–375 (IQAASATPPT…DTSSSTIEDQ (85 aa)). Residues 351-361 (DMDDGDDSDDD) show a composition bias toward acidic residues. A helical transmembrane segment spans residues 379–399 (GGISIIRFIFSSAAWLFSFVF). The segment covering 403–413 (TPSENSLSNQQ) has biased composition (polar residues). Disordered stretches follow at residues 403 to 535 (TPSE…QEED) and 724 to 770 (NGSS…SPVP). Residues 414-424 (IDDDEDYEDGD) are compositionally biased toward acidic residues. The span at 432–451 (TDSMTSTTKGRANTMPSTTR) shows a compositional bias: polar residues. 2 stretches are compositionally biased toward low complexity: residues 452–467 (SQNNNNSQKQQKQSNG) and 475–490 (SHQNNHQKSNGNSNGH). The stretch at 503 to 726 (DTNASNETDI…VQEFQIKNGS (224 aa)) forms a coiled coil. Over residues 510–535 (TDIRSMSRELESLRSEISSRRSQEED) the composition is skewed to basic and acidic residues. A compositionally biased stretch (polar residues) spans 734–761 (ETLMNGRSSTEANNENDTTASDQSSPHQ).

Strong expression in many neurons, very weak expression is also detected in others tissues.

The protein resides in the rough endoplasmic reticulum membrane. Its subcellular location is the nucleus membrane. Plays a role in the regulation of neuronal activity. In AWA and AWC neurons, plays a role in regulating olfactory adaptation by controlling the forgetting sensory responses to odorants such as diacetyl and isoamyl alcohol. May play a role in regulating daf-7 expression in ASI neurons in response to bacterial small RNAs. In ASI neurons, promotes dauer formation in response to pheromones such as the ascarosides ascr#2 and ascr#3. This Caenorhabditis elegans protein is Macoilin.